A 660-amino-acid chain; its full sequence is Bifunctional polymyxin resistance protein ArnA (660 aa).

A formyltransferase ArnAFT region spans residues 1–304; it reads MKAVIFAYHD…TLGLVAGARL (304 aa). H104 functions as the Proton donor; for formyltransferase activity in the catalytic mechanism. (6R)-10-formyltetrahydrofolate contacts are provided by residues R114 and 136–140; that span reads VKRAD. The interval 314-660 is dehydrogenase ArnADH; sequence RRIRVLILGV…RSVDVAERAS (347 aa). NAD(+) contacts are provided by residues D347 and 368–369; that span reads DI. UDP-alpha-D-glucuronate is bound by residues A393, Y398, and 432-433; that span reads TS. E434 functions as the Proton acceptor; for decarboxylase activity in the catalytic mechanism. UDP-alpha-D-glucuronate is bound by residues R460, N492, 526 to 535, and Y613; that span reads KLIDGGQQKR. R619 functions as the Proton donor; for decarboxylase activity in the catalytic mechanism.

In the N-terminal section; belongs to the Fmt family. UDP-L-Ara4N formyltransferase subfamily. This sequence in the C-terminal section; belongs to the NAD(P)-dependent epimerase/dehydratase family. UDP-glucuronic acid decarboxylase subfamily. Homohexamer, formed by a dimer of trimers.

It carries out the reaction UDP-alpha-D-glucuronate + NAD(+) = UDP-beta-L-threo-pentopyranos-4-ulose + CO2 + NADH. The enzyme catalyses UDP-4-amino-4-deoxy-beta-L-arabinose + (6R)-10-formyltetrahydrofolate = UDP-4-deoxy-4-formamido-beta-L-arabinose + (6S)-5,6,7,8-tetrahydrofolate + H(+). Its pathway is nucleotide-sugar biosynthesis; UDP-4-deoxy-4-formamido-beta-L-arabinose biosynthesis; UDP-4-deoxy-4-formamido-beta-L-arabinose from UDP-alpha-D-glucuronate: step 1/3. It participates in nucleotide-sugar biosynthesis; UDP-4-deoxy-4-formamido-beta-L-arabinose biosynthesis; UDP-4-deoxy-4-formamido-beta-L-arabinose from UDP-alpha-D-glucuronate: step 3/3. It functions in the pathway bacterial outer membrane biogenesis; lipopolysaccharide biosynthesis. In terms of biological role, bifunctional enzyme that catalyzes the oxidative decarboxylation of UDP-glucuronic acid (UDP-GlcUA) to UDP-4-keto-arabinose (UDP-Ara4O) and the addition of a formyl group to UDP-4-amino-4-deoxy-L-arabinose (UDP-L-Ara4N) to form UDP-L-4-formamido-arabinose (UDP-L-Ara4FN). The modified arabinose is attached to lipid A and is required for resistance to polymyxin and cationic antimicrobial peptides. This Salmonella enteritidis PT4 (strain P125109) protein is Bifunctional polymyxin resistance protein ArnA.